A 101-amino-acid polypeptide reads, in one-letter code: MSDYFEEVMRKLTIEDVSILGWLFQNEANAVFKAIKKSSIADELEYSTANFRKTLNKLEAIHFIGTVTGGKEHKLYLTEYGQQAVQQAIHHGEENEEVEEI.

As to quaternary structure, homodimer. Dimers bind to DNA, forming a protein-bound filament which may form a helix around the TubZ filament.

Its function is as follows. A DNA-binding protein that is part of the type III plasmid partition system used to ensure correct segregation of the pBM400 plasmid. Binds the plasmid origin of replication, probably cooperatively, forming a ring or short helix with external DNA. Its effect on RNA expression has not been shown. This is DNA-binding protein TubR from Priestia megaterium (strain ATCC 12872 / QMB1551) (Bacillus megaterium).